We begin with the raw amino-acid sequence, 68 residues long: Conotoxin ArMMSK-01 (68 aa).

The N-terminal stretch at 1 to 20 is a signal peptide; that stretch reads MMSKLGVLLTICMLLFPLTA. Residues 21 to 51 constitute a propeptide that is removed on maturation; sequence LPLDGDQPADRPAERMQDDFISEQHPLFNPI. 3 disulfides stabilise this stretch: C54/C67, C55/C63, and C59/C66. P65 is subject to 4-hydroxyproline.

It belongs to the conotoxin M superfamily. Expressed by the venom duct.

It is found in the secreted. This chain is Conotoxin ArMMSK-01, found in Conus arenatus (Sand-dusted cone).